The following is a 470-amino-acid chain: Chromosomal replication initiator protein DnaA (470 aa).

Positions 1–79 are domain I, interacts with DnaA modulators; it reads MTDDTWGLLR…AVQRLAFKVA (79 aa). The interval 79–128 is domain II; the sequence is AANSPTRPVQPTMSEAIEEPAPLQTTVVDQLGNQEGNTSVKSPPEDLQAA. The tract at residues 129–350 is domain III, AAA+ region; it reads PLDPRFTFDS…GALTRLFAFA (222 aa). Positions 173, 175, 176, and 177 each coordinate ATP. The domain IV, binds dsDNA stretch occupies residues 351 to 470; that stretch reads SLVGREIDMD…VEMLRRSLEA (120 aa).

This sequence belongs to the DnaA family. In terms of assembly, oligomerizes as a right-handed, spiral filament on DNA at oriC.

It localises to the cytoplasm. Its function is as follows. Plays an essential role in the initiation and regulation of chromosomal replication. ATP-DnaA binds to the origin of replication (oriC) to initiate formation of the DNA replication initiation complex once per cell cycle. Binds the DnaA box (a 9 base pair repeat at the origin) and separates the double-stranded (ds)DNA. Forms a right-handed helical filament on oriC DNA; dsDNA binds to the exterior of the filament while single-stranded (ss)DNA is stabiized in the filament's interior. The ATP-DnaA-oriC complex binds and stabilizes one strand of the AT-rich DNA unwinding element (DUE), permitting loading of DNA polymerase. After initiation quickly degrades to an ADP-DnaA complex that is not apt for DNA replication. Binds acidic phospholipids. The sequence is that of Chromosomal replication initiator protein DnaA from Ruegeria sp. (strain TM1040) (Silicibacter sp.).